The following is a 231-amino-acid chain: Somatolactin-2 (231 aa).

An N-terminal signal peptide occupies residues 1–24 (MRMMRAIKQGQWAILLWPYLLTTS). Intrachain disulfides connect cysteine 29-cysteine 39, cysteine 89-cysteine 205, and cysteine 222-cysteine 230. N-linked (GlcNAc...) asparagine glycosylation occurs at asparagine 145.

This sequence belongs to the somatotropin/prolactin family. Pituitary gland.

The protein resides in the secreted. In Sparus aurata (Gilthead sea bream), this protein is Somatolactin-2.